A 370-amino-acid polypeptide reads, in one-letter code: tRNA-specific 2-thiouridylase MnmA (370 aa).

ATP-binding positions include 9 to 16 (GMSGGVDS) and M35. The interval 95-97 (NPD) is interaction with target base in tRNA. The Nucleophile role is filled by C100. A disulfide bridge links C100 with C196. G124 contributes to the ATP binding site. An interaction with tRNA region spans residues 146-148 (KDQ). C196 functions as the Cysteine persulfide intermediate in the catalytic mechanism. The segment at 308 to 309 (RY) is interaction with tRNA.

It belongs to the MnmA/TRMU family.

Its subcellular location is the cytoplasm. It carries out the reaction S-sulfanyl-L-cysteinyl-[protein] + uridine(34) in tRNA + AH2 + ATP = 2-thiouridine(34) in tRNA + L-cysteinyl-[protein] + A + AMP + diphosphate + H(+). In terms of biological role, catalyzes the 2-thiolation of uridine at the wobble position (U34) of tRNA, leading to the formation of s(2)U34. The chain is tRNA-specific 2-thiouridylase MnmA from Ralstonia nicotianae (strain ATCC BAA-1114 / GMI1000) (Ralstonia solanacearum).